We begin with the raw amino-acid sequence, 507 residues long: Arabinose import ATP-binding protein AraG (507 aa).

2 ABC transporter domains span residues 8-243 (LSFH…MVGR) and 255-499 (PHGE…MLRI). Residue 40–47 (GENGAGKS) participates in ATP binding.

The protein belongs to the ABC transporter superfamily. Arabinose importer (TC 3.A.1.2.2) family. As to quaternary structure, the complex is composed of two ATP-binding proteins (AraG), two transmembrane proteins (AraH) and a solute-binding protein (AraF).

The protein resides in the cell inner membrane. The catalysed reaction is L-arabinose(out) + ATP + H2O = L-arabinose(in) + ADP + phosphate + H(+). Its function is as follows. Part of the ABC transporter complex AraFGH involved in arabinose import. Responsible for energy coupling to the transport system. This is Arabinose import ATP-binding protein AraG from Pectobacterium atrosepticum (strain SCRI 1043 / ATCC BAA-672) (Erwinia carotovora subsp. atroseptica).